Consider the following 1393-residue polypeptide: DNA glycosylase/AP lyase ROS1 (1393 aa).

Disordered stretches follow at residues 1–25 (MEKQRREESSFQQPPWIPQTPMKPF), 98–186 (SLSS…TSTR), and 237–265 (LSAPSTPKRKRSQGKRKGVQPKKNGSNLE). Residues 98-108 (SLSSVSNNVAE) show a composition bias toward low complexity. Residues 117-126 (PKRKKHRPKV) show a composition bias toward basic residues. Composition is skewed to basic and acidic residues over residues 127–138 (RREAKPKREPKP) and 162–171 (KKVEVSKDQD). Basic residues predominate over residues 243-256 (PKRKRSQGKRKGVQ). The DEMETER stretch occupies residues 528–626 (KVDLDDETDR…AFMSLASQFP (99 aa)). The span at 653–672 (EETMSSPPDHNHSSVTLKNT) shows a compositional bias: polar residues. Disordered stretches follow at residues 653-722 (EETM…SVEV) and 789-830 (SNQV…CSQQ). Residues 687-698 (SRSSSEIAISAH) show a composition bias toward low complexity. Over residues 699-722 (ESVDKTTDSKEYVDSDRKGSSVEV) the composition is skewed to basic and acidic residues. A compositionally biased stretch (polar residues) spans 816-830 (KSSVDSSEPGCCSQQ). K901 participates in a covalent cross-link: Glycyl lysine isopeptide (Lys-Gly) (interchain with G-Cter in ubiquitin). [4Fe-4S] cluster contacts are provided by C1038, C1045, C1048, and C1054.

Belongs to the DNA glycosylase family. DEMETER subfamily. As to quaternary structure, interacts (via the central region) with ZDP. Binds to RPA2A. Interacts with XRCC1. Interacts probably with a complex made of MBD7, IDM1, IDM2 and IDM3. Interacts with APE1L. The cofactor is [4Fe-4S] cluster. In terms of tissue distribution, expressed ubiquitously in both vegetative and reproductive organs.

The protein localises to the nucleus. The protein resides in the nucleolus. The enzyme catalyses 2'-deoxyribonucleotide-(2'-deoxyribose 5'-phosphate)-2'-deoxyribonucleotide-DNA = a 3'-end 2'-deoxyribonucleotide-(2,3-dehydro-2,3-deoxyribose 5'-phosphate)-DNA + a 5'-end 5'-phospho-2'-deoxyribonucleoside-DNA + H(+). With respect to regulation, stimulated by ZDP. Stimulated by XRCC1. In terms of biological role, bifunctional DNA glycosylase/lyase, which excises 5-methylcytosine (5-meC) and 5-hydroxymethylcytosine (5-hmeC), leaving an apyrimidinic (AP) site that is subsequently incised by the lyase activity. Generates 3'-phosphor-alpha,beta-unsaturated aldehyde (3'-PUA) as a primary 5-meC excision intermediate. Prevents DNA hypermethylation, specifically in the promoter of otherwise silenced loci. May be involved in DNA repair through its nicking activity on methylated DNA. Binds with similar affinity to both methylated and non-methylated DNA. Highly distributive behavior on DNA substrates containing multiple 5-meC residues. Involved with Pol IV in the remodeling of the 5S rDNA chromatin via DNA methylation modifications during the first days of development post-germination. Participates in UV-B induced- and oxidative DNA damage repair. This chain is DNA glycosylase/AP lyase ROS1, found in Arabidopsis thaliana (Mouse-ear cress).